The primary structure comprises 194 residues: Glycerol-3-phosphate acyltransferase (194 aa).

5 helical membrane passes run 4–24 (EIVL…LLLA), 78–98 (EIWV…TVFL), 110–130 (LGVF…IFVF), 137–157 (YVSL…ALIE), and 161–181 (LLIT…RENI).

The protein belongs to the PlsY family. Probably interacts with PlsX.

Its subcellular location is the cell inner membrane. It carries out the reaction an acyl phosphate + sn-glycerol 3-phosphate = a 1-acyl-sn-glycero-3-phosphate + phosphate. Its pathway is lipid metabolism; phospholipid metabolism. Catalyzes the transfer of an acyl group from acyl-phosphate (acyl-PO(4)) to glycerol-3-phosphate (G3P) to form lysophosphatidic acid (LPA). This enzyme utilizes acyl-phosphate as fatty acyl donor, but not acyl-CoA or acyl-ACP. This Geotalea daltonii (strain DSM 22248 / JCM 15807 / FRC-32) (Geobacter daltonii) protein is Glycerol-3-phosphate acyltransferase.